The sequence spans 394 residues: Phosphopentomutase (394 aa).

The Mn(2+) site is built by aspartate 14, aspartate 287, histidine 292, aspartate 328, histidine 329, and histidine 340.

This sequence belongs to the phosphopentomutase family. Mn(2+) is required as a cofactor.

It localises to the cytoplasm. It catalyses the reaction 2-deoxy-alpha-D-ribose 1-phosphate = 2-deoxy-D-ribose 5-phosphate. The catalysed reaction is alpha-D-ribose 1-phosphate = D-ribose 5-phosphate. Its pathway is carbohydrate degradation; 2-deoxy-D-ribose 1-phosphate degradation; D-glyceraldehyde 3-phosphate and acetaldehyde from 2-deoxy-alpha-D-ribose 1-phosphate: step 1/2. Functionally, isomerase that catalyzes the conversion of deoxy-ribose 1-phosphate (dRib-1-P) and ribose 1-phosphate (Rib-1-P) to deoxy-ribose 5-phosphate (dRib-5-P) and ribose 5-phosphate (Rib-5-P), respectively. The sequence is that of Phosphopentomutase from Listeria monocytogenes serovar 1/2a (strain ATCC BAA-679 / EGD-e).